Consider the following 595-residue polypeptide: Ketol-acid reductoisomerase, chloroplastic (595 aa).

Residues 1 to 72 (MAATAATTFS…GGGSALSAQM (72 aa)) constitute a chloroplast transit peptide. One can recognise a KARI N-terminal Rossmann domain in the interval 108–306 (VRGGRNLFPL…ALGSPFTFAT (199 aa)). Residues 129–136 (GVIGWGSQ), 162–167 (RKGSNS), and 201–205 (SDSAQ) contribute to the NADP(+) site. His226 is an active-site residue. KARI C-terminal knotted domains follow at residues 307 to 455 (TLEQ…RPAG) and 456 to 592 (DLGP…RPEL). Residues Asp315, Glu319, Glu492, and Glu496 each coordinate Mg(2+). Ser518 contacts substrate.

It belongs to the ketol-acid reductoisomerase family. Homodimer. Mg(2+) is required as a cofactor.

It is found in the plastid. The protein localises to the chloroplast. It carries out the reaction (2R)-2,3-dihydroxy-3-methylbutanoate + NADP(+) = (2S)-2-acetolactate + NADPH + H(+). The catalysed reaction is (2R,3R)-2,3-dihydroxy-3-methylpentanoate + NADP(+) = (S)-2-ethyl-2-hydroxy-3-oxobutanoate + NADPH + H(+). Its pathway is amino-acid biosynthesis; L-isoleucine biosynthesis; L-isoleucine from 2-oxobutanoate: step 2/4. The protein operates within amino-acid biosynthesis; L-valine biosynthesis; L-valine from pyruvate: step 2/4. The chain is Ketol-acid reductoisomerase, chloroplastic (AHRI) from Spinacia oleracea (Spinach).